The sequence spans 720 residues: Beta-glucan synthesis-associated protein KRE6 (720 aa).

Composition is skewed to polar residues over residues 1–17 (MPLRNLTETHNFSSTNL), 31–51 (LSSSPSFGQQNDNSTNDNAGL), and 69–90 (SLSSSVHYQPQGSDSSLLHDNS). The segment at 1–90 (MPLRNLTETH…SDSSLLHDNS (90 aa)) is disordered. Over 1–252 (MPLRNLTETH…KYMDKRSASG (252 aa)) the chain is Cytoplasmic. Phosphoserine occurs at positions 81, 116, 133, 134, 136, and 139. Disordered stretches follow at residues 117 to 142 (TANDNSFLQPPHRAIASSPSLNSNLS) and 167 to 189 (QLNHHGRSPTSSPGNESSASFSS). Residues 133–142 (SSPSLNSNLS) are compositionally biased toward low complexity. The chain crosses the membrane as a helical; Signal-anchor for type II membrane protein span at residues 253 to 273 (LAGVLLLFLAAIFIFIVLPAL). Residues 274-720 (TFTGAIDHES…CTSSKFKLSS (447 aa)) lie on the Lumenal side of the membrane. The 376-residue stretch at 289 to 664 (TYLTQYQYPQ…YVRIYQPSNA (376 aa)) folds into the GH16 domain. Residues N374, N461, N538, N563, and N691 are each glycosylated (N-linked (GlcNAc...) asparagine).

It belongs to the SKN1/KRE6 family. The cytoplasmic domain interacts with the actin patch assembly proteins LAS17 and SLA1. Interacts with KEG1.

It localises to the golgi apparatus membrane. Its function is as follows. Involved in the synthesis of (1-&gt;6)- and (1-&gt;3)-beta-D-glucan polymers of the yeast cell wall in vivo. It is required for full activity of beta-glucan synthase in vitro. May be involved in the maturation and transport of cell wall proteins (CWP) to the cell wall. May act as a transglucosidase and contribute to the construction of a protein-bound glucan-structure that acts as an acceptor site for the addition of (1-&gt;6)-beta-D-glucan at the cell surface. This chain is Beta-glucan synthesis-associated protein KRE6 (KRE6), found in Saccharomyces cerevisiae (strain ATCC 204508 / S288c) (Baker's yeast).